A 1318-amino-acid polypeptide reads, in one-letter code: Tetratricopeptide repeat protein 41 (1318 aa).

6 TPR repeats span residues 401 to 434, 653 to 686, 819 to 852, 860 to 893, 993 to 1029, and 1047 to 1084; these read PRLE…KPCI, WIQE…PVRE, GRII…LLQS, LRAQ…LLRF, MEFL…KEKA, and SDTL…RAAH. The segment at 1295–1318 is disordered; sequence KPGFPRRSQIESKLLKTSDDPNKE. A compositionally biased stretch (basic and acidic residues) spans 1302–1318; it reads SQIESKLLKTSDDPNKE.

As to expression, highly expressed in lung and myeloid leukemia cell line (at protein level). Isoform 4: expressed in heart (at protein level).

It localises to the cytoplasm. This is Tetratricopeptide repeat protein 41 from Mus musculus (Mouse).